A 625-amino-acid chain; its full sequence is Pyriculol/pyriculariol biosynthesis cluster transcription factor 1 (625 aa).

Disordered stretches follow at residues 1-83 (MATE…ATQD) and 466-496 (PMSA…LPAS). The segment covering 46-59 (TPSPSTPANPNSAS) has biased composition (low complexity). A DNA-binding region (homeobox) is located at residues 73–132 (KNQKRQRATQDQLTTLEQEFAKNPTPTATVRDRIAEEINMTERSVQIWFQNRRAKIKLMA). The segment covering 467–496 (MSATTAPSPSEYNSPSFFSQAPENTPLPAS) has biased composition (polar residues).

It localises to the nucleus. Transcriptional regulator; part of the gene cluster that mediates the biosynthesis of pyriculol and pyriculariol, two heptaketides that induce lesion formation upon application on rice leaves but are dispensable for pathogenicity. With TRF1, negatively regulates the expression of the gene cluster and the subsequent pyriculol and pyriculariol production. This is Pyriculol/pyriculariol biosynthesis cluster transcription factor 1 from Pyricularia oryzae (strain 70-15 / ATCC MYA-4617 / FGSC 8958) (Rice blast fungus).